The primary structure comprises 119 residues: Large ribosomal subunit protein bL20 (119 aa).

This sequence belongs to the bacterial ribosomal protein bL20 family.

Its function is as follows. Binds directly to 23S ribosomal RNA and is necessary for the in vitro assembly process of the 50S ribosomal subunit. It is not involved in the protein synthesizing functions of that subunit. This chain is Large ribosomal subunit protein bL20, found in Xylella fastidiosa (strain 9a5c).